The sequence spans 206 residues: Orotate phosphoribosyltransferase (206 aa).

Residues Arg97, Lys98, Lys101, and 125-133 (NDVIASGRS) contribute to the 5-phospho-alpha-D-ribose 1-diphosphate site. An orotate-binding site is contributed by Arg157.

Belongs to the purine/pyrimidine phosphoribosyltransferase family. PyrE subfamily. In terms of assembly, homodimer. Mg(2+) serves as cofactor.

The enzyme catalyses orotidine 5'-phosphate + diphosphate = orotate + 5-phospho-alpha-D-ribose 1-diphosphate. It functions in the pathway pyrimidine metabolism; UMP biosynthesis via de novo pathway; UMP from orotate: step 1/2. In terms of biological role, catalyzes the transfer of a ribosyl phosphate group from 5-phosphoribose 1-diphosphate to orotate, leading to the formation of orotidine monophosphate (OMP). The protein is Orotate phosphoribosyltransferase of Chlamydia caviae (strain ATCC VR-813 / DSM 19441 / 03DC25 / GPIC) (Chlamydophila caviae).